Here is a 225-residue protein sequence, read N- to C-terminus: Small ribosomal subunit protein uS2 (225 aa).

The segment covering 1–13 (MAEAKPALEKEAA) has biased composition (basic and acidic residues). A disordered region spans residues 1-33 (MAEAKPALEKEAAVKTGSIPSESEDETASHKEG).

This sequence belongs to the universal ribosomal protein uS2 family.

In Methanosarcina acetivorans (strain ATCC 35395 / DSM 2834 / JCM 12185 / C2A), this protein is Small ribosomal subunit protein uS2.